We begin with the raw amino-acid sequence, 431 residues long: V-type ATP synthase beta chain (431 aa).

It belongs to the ATPase alpha/beta chains family.

Functionally, produces ATP from ADP in the presence of a proton gradient across the membrane. The V-type beta chain is a regulatory subunit. The protein is V-type ATP synthase beta chain of Treponema denticola (strain ATCC 35405 / DSM 14222 / CIP 103919 / JCM 8153 / KCTC 15104).